Reading from the N-terminus, the 107-residue chain is Neuroparsin-A (107 aa).

Positions 1–22 (MKATAALVAATLLLAVTLFHRA) are cleaved as a signal peptide. Positions 23 to 24 (ER) are excised as a propeptide.

In terms of assembly, homodimer; disulfide-linked.

Functionally, neurosparins are multifunctional neurohormones: they inhibit the effects of juvenile hormone, stimulate fluid reabsorption of isolated recta and induces an increase in hemolymph lipid and trehalose levels. This is Neuroparsin-A from Locusta migratoria (Migratory locust).